The primary structure comprises 352 residues: MFSMILSGLICGALLGFVMQRGRFCLTGGFRDMYIVKNNRMFYALLIAISVQSVGVFALIQAGLLTYEAGAFPWLGTVIGGYIFGLGIVLAGGCATGTWYRAGEGLIGSWIALFTYMVMSAVMRSPHASGLNQTLQHYSTEHNSIAETFNLSVWPLVAVLLVITLWVVMKELKKPKLKVATLPPRRTGIAHILFEKRWHPFVTAVLIGLIALLAWPLSEATGRMFGLGITSPTANILQFLVAGDMKYINWGVFLVLGIFVGSFIAAKASREFRVRAADAQTTLRSGLGGVLMGFGASIAGGCSIGNGLVMTAMMTWQGWIGLVFMILGVWTASWLVYVRPQRKARLATAAAN.

The chain crosses the membrane as a helical span at residues 1-21 (MFSMILSGLICGALLGFVMQR). The Cytoplasmic segment spans residues 22–44 (GRFCLTGGFRDMYIVKNNRMFYA). The helical transmembrane segment at 45–65 (LLIAISVQSVGVFALIQAGLL) threads the bilayer. Topologically, residues 66–70 (TYEAG) are periplasmic. The helical transmembrane segment at 71-91 (AFPWLGTVIGGYIFGLGIVLA) threads the bilayer. Topologically, residues 92–102 (GGCATGTWYRA) are cytoplasmic. The helical transmembrane segment at 103–123 (GEGLIGSWIALFTYMVMSAVM) threads the bilayer. Residues 124–148 (RSPHASGLNQTLQHYSTEHNSIAET) lie on the Periplasmic side of the membrane. Residues 149–169 (FNLSVWPLVAVLLVITLWVVM) traverse the membrane as a helical segment. Residues 170–197 (KELKKPKLKVATLPPRRTGIAHILFEKR) are Cytoplasmic-facing. A helical transmembrane segment spans residues 198–218 (WHPFVTAVLIGLIALLAWPLS). Residues 219-247 (EATGRMFGLGITSPTANILQFLVAGDMKY) lie on the Periplasmic side of the membrane. The chain crosses the membrane as a helical span at residues 248–268 (INWGVFLVLGIFVGSFIAAKA). Residues 269 to 289 (SREFRVRAADAQTTLRSGLGG) are Cytoplasmic-facing. Residues 290-310 (VLMGFGASIAGGCSIGNGLVM) traverse the membrane as a helical segment. Topologically, residues 311–317 (TAMMTWQ) are periplasmic. Residues 318–338 (GWIGLVFMILGVWTASWLVYV) form a helical membrane-spanning segment. Residues 339–352 (RPQRKARLATAAAN) lie on the Cytoplasmic side of the membrane.

Belongs to the TsuA/YedE (TC 9.B.102) family.

The protein resides in the cell inner membrane. The catalysed reaction is thiosulfate(in) = thiosulfate(out). Its function is as follows. Mediates thiosulfate uptake. The sequence is that of Thiosulfate transporter TsuA from Escherichia coli (strain K12).